Reading from the N-terminus, the 2391-residue chain is Filaggrin-2 (2391 aa).

The tract at residues 1–81 is S-100-like; the sequence is MTDLLRSVVT…TEFLLMIFKL (81 aa). EF-hand domains lie at 8–43 and 49–84; these read VVTVIDVFYKYTKQDGECGTLSKGELKELLEKELHP and DDPDTVDVIMHMLDRDHDRRLDFTEFLLMIFKLTMA. Ca(2+) is bound by residues D62, D64, D66, R68, and E73. 3 disordered regions span residues 96–275, 349–369, and 406–2391; these read ASGS…DSGR, SYSQRGYGARENGQPQNCGGQ, and NSSS…LSRH. Residues 98–107 show a composition bias toward basic residues; that stretch reads GSKKHRRGHR. Acidic residues predominate over residues 111-121; that stretch reads EESETEEDEED. Over residues 149-163 the composition is skewed to basic residues; sequence GTVKCRHGSNSRRLG. Polar residues predominate over residues 166-176; it reads GNLSSSGNQEG. The segment covering 193–209 has biased composition (basic and acidic residues); sequence GKDRHGSSSVELRERIN. A Filaggrin 1 repeat occupies 245 to 289; the sequence is ETSGHESNSTQSRIREQKLGSSCSGSGDSGRRSHACGYSNSSGCG. Composition is skewed to polar residues over residues 420–442 and 449–476; these read GSGSSQSTSFEQHGTGLSQSSGF and SGQTCGQHESTSSQSLGYDQHGSSSGKT. One copy of the Filaggrin 2 repeat lies at 421 to 466; it reads SGSSQSTSFEQHGTGLSQSSGFEQHVCGSGQTCGQHESTSSQSLGY. Residues 480-507 show a composition bias toward gly residues; that stretch reads GQHGSGSGQSSGFGQCGSGSGQSSGFGQ. Residues 508–562 show a composition bias toward low complexity; that stretch reads HGSVSGQSSGFGQHGSVSGQSSGFGQHESRSRQSSYGQHGSGSSQSSGYGQYGSR. Gly residues predominate over residues 568 to 604; the sequence is GQHGLGSGQSTGFGQYGSGSGQSSGFGQHGSGSGQSS. Residues 605–655 show a composition bias toward low complexity; it reads GFGQHESRSGQSSYGQHSSGSSQSSGYGQHGSRQTSGFGQHGSGSSQSTGF. The segment covering 656–666 has biased composition (gly residues); it reads GQYGSGSGQSS. The segment covering 667-734 has biased composition (low complexity); it reads GFGQHVSGSG…SSGQSSSFGQ (68 aa). Over residues 735-756 the composition is skewed to gly residues; sequence HGSGSGQSSGFGQHGSGSGQSS. Low complexity predominate over residues 757 to 807; sequence GFGQHESRSGQSSYGQHSSGSSQSSGYGQHGSRQTSGFGQHGSGSSQSTGF. Gly residues predominate over residues 808-831; the sequence is GQYGSGSGQSAGFGQHGSGSGQSS. Low complexity predominate over residues 832–884; that stretch reads GFGQHESRSHQSSYGQHGSGSSQSSGYGQHGSSSGQTSGFGQHRSSSGQYSGF. Residues 885–908 show a composition bias toward gly residues; it reads GQHGSGSGQSSGFGQHGTGSGQYS. The segment covering 918–956 has biased composition (low complexity); the sequence is HQSSYGQHGSGSSQSSGYGQHGSSSGQTFGFGQHRSGSG. A compositionally biased stretch (gly residues) spans 957 to 972; sequence QSSGFGQHGSGSGQSS. 2 stretches are compositionally biased toward low complexity: residues 973–982 and 994–1027; these read GFGQHESGSG and SSQSNYGQHGSGSSQSSGYGQHGSSSGQTTGFGQ. Residues 1019-1051 form a Filaggrin 3 repeat; that stretch reads SGQTTGFGQHRSSSGQYSGFGQHGSGSDQSSGF. Gly residues predominate over residues 1052 to 1062; sequence GQHGTGSGQSS. Residues 1063 to 1098 are compositionally biased toward low complexity; sequence GFGQYESRSRQSSYGQHGSGSSQSSGYGQHGSNSGQ. The stretch at 1097–1141 is one Filaggrin 4 repeat; it reads GQTSGFGQHRPGSGQSSGFGQYGSGSGQSSGFGQHGSGTGKSSGF. Positions 1111–1137 are enriched in gly residues; the sequence is QSSGFGQYGSGSGQSSGFGQHGSGTGK. Low complexity predominate over residues 1148 to 1174; it reads SGQSSYGQHGTGSSQSSGCGQHESGSG. Polar residues predominate over residues 1175–1198; it reads PTTSFGQHVSGSDNFSSSGQHISD. Over residues 1206–1220 the composition is skewed to gly residues; that stretch reads GQYGSGSGQSTGLGQ. A compositionally biased stretch (polar residues) spans 1226–1249; that stretch reads VESGSTVHGRQETTHGQTINTTRH. Low complexity predominate over residues 1250–1263; it reads SQSGQGQSTQTGSR. Position 1276 is a phosphoserine (S1276). The span at 1329–1343 shows a compositional bias: polar residues; that stretch reads HGQSTQTGSRTSGRQ. The span at 1346 to 1355 shows a compositional bias: basic and acidic residues; it reads SHSDATDSEV. Polar residues predominate over residues 1366 to 1377; the sequence is QEQTHSQAGSQH. Residues 1378-1390 are compositionally biased toward basic and acidic residues; sequence GESESTVHERHET. Residues 1406–1416 show a composition bias toward low complexity; sequence HGQSTQRGSRT. Phosphoserine is present on residues S1427 and S1428. The segment covering 1439–1459 has biased composition (polar residues); the sequence is RPQSQEQTHGQAGSQHGESGS. Residues 1455–1510 form a Filaggrin 5 repeat; the sequence is GESGSTVHGRHGTTHGQTGDTTRHAHYHHGKSTQRGSSTTGRRGSGHSESSDSEVH. Residues 1487–1496 are compositionally biased toward low complexity; that stretch reads TQRGSSTTGR. A phosphoserine mark is found at S1504 and S1505. The span at 1510–1529 shows a compositional bias: low complexity; that stretch reads HSGGSHTHSGHTHGQSGSQH. Polar residues predominate over residues 1544 to 1559; sequence HGQTGDTTRHSYSGHE. The segment covering 1560 to 1572 has biased composition (low complexity); it reads QTTQTGSRTTGRQ. Basic and acidic residues-rich tracts occupy residues 1575–1584 and 1605–1618; these read SHSESTDSEV and QHEEPEFTVHERHG. A Phosphoserine modification is found at S1579. One copy of the Filaggrin 6 repeat lies at 1607–1662; that stretch reads EEPEFTVHERHGTTHGQIGDTTGHSHSGHGQSTQRGSRTTGRQRSSHSESSDSEVH. A compositionally biased stretch (low complexity) spans 1627 to 1649; that stretch reads TTGHSHSGHGQSTQRGSRTTGRQ. Over residues 1652 to 1661 the composition is skewed to basic and acidic residues; it reads SHSESSDSEV. 2 positions are modified to phosphoserine: S1656 and S1657. Composition is skewed to low complexity over residues 1662–1686 and 1711–1720; these read HSGVSHTHTGHTHGQAGSQHGQSES and GLTTQTGSRT. A compositionally biased stretch (basic and acidic residues) spans 1755-1768; sequence QHGESESIVHERHG. The Filaggrin 7 repeat unit spans residues 1757 to 1812; the sequence is GESESIVHERHGTIHGQTGDTTRHAHSGHGQSTQTGSRTTGRRSSGHSEYSDSEGH. The span at 1784–1795 shows a compositional bias: low complexity; sequence GHGQSTQTGSRT. A phosphoserine mark is found at S1800 and S1807. The segment covering 1834 to 1845 has biased composition (basic and acidic residues); the sequence is GESESIVDERHG. Over residues 1849-1873 the composition is skewed to low complexity; sequence GQTGDTSGHSQSGHGQSTQSGSSTT. A compositionally biased stretch (basic and acidic residues) spans 1879–1888; it reads GHSESSDSEV. Phosphoserine occurs at positions 1883, 1884, and 1959. Filaggrin repeat units lie at residues 1928 to 1964 and 1984 to 2039; these read DTTEHGHPSHGQTIQTGSRTTGRRGSGHSEYSDSEGP and PESG…SEGH. Low complexity-rich tracts occupy residues 1963–1982 and 2013–2022; these read GPSGVSHTHSGHTHGQAGSH and GQSTQRGSRT. S2034 is subject to Phosphoserine. Low complexity-rich tracts occupy residues 2039-2059, 2114-2125, and 2162-2176; these read HSGVSHTHSGHAHGQAGSQHG, HSGVSHTHSGHT, and HGQSTQTGSRTTGRQ. Residues 2134-2189 form a Filaggrin 10 repeat; that stretch reads GESGSAIHGRQGTIHGQTGDTTRHGQSGHGQSTQTGSRTTGRQRSSHSESSDSEVH. Basic and acidic residues predominate over residues 2179–2190; that stretch reads SHSESSDSEVHS. 3 stretches are compositionally biased toward low complexity: residues 2201–2211, 2219–2228, and 2238–2247; these read HSQAGSRHGQS, QGTTHGQTGD, and GQSTQRGSRT. Over residues 2273–2288 the composition is skewed to polar residues; that stretch reads GHIQGQAGSQQRQPGS. Positions 2320 to 2331 are enriched in low complexity; sequence SRSSRASHFQSH. Positions 2367–2391 are enriched in polar residues; that stretch reads SRKSISNSHLSWSTDSTANKQLSRH.

It belongs to the S100-fused protein family. In the N-terminal section; belongs to the S-100 family. Deiminated by PADI1, PADI2 or PADI3 in vitro. The deiminated form is degraded by calpain-1/CAPN1 more quickly and into shorter peptides than the intact protein. Post-translationally, may be processed by calpain-1/CAPN1 in the uppermost epidermal layers. Expressed in skin, thymus, stomach and placenta, but not detected in heart, brain, liver, lung, bone marrow, small intestine, spleen, prostate, colon, adrenal gland, kidney, pancreas, mammary gland, bladder, thyroid, salivary gland and trachea. Weakly expressed in esophagus, tonsils and testis (at protein level). In the skin, strongly expressed in the upper stratum granulosum and lower stratum corneum, but not detected in the upper stratum corneum (at protein level). In scalp hair follicles, mainly restricted within the granular and cornified cells surrounding the infundibular outer root sheath, with weak expression in central and proximal outer root sheath (at protein level). Tends to be down-regulated in sporiatic lesions compared to non-lesional skin inthe same patients.

Its subcellular location is the cytoplasm. The protein resides in the cytoplasmic granule. In terms of biological role, essential for normal cell-cell adhesion in the cornified cell layers. Important for proper integrity and mechanical strength of the stratum corneum of the epidermis. This Homo sapiens (Human) protein is Filaggrin-2 (FLG2).